The sequence spans 1198 residues: Fibronectin type-III domain-containing protein 3a (1198 aa).

Basic and acidic residues predominate over residues 189–201 (KLKDRHGTQKDKL). The segment at 189–256 (KLKDRHGTQK…SQTDVEIEEK (68 aa)) is disordered. The segment covering 229-247 (GISTGSTKSKSVGKGKSNS) has biased composition (low complexity). 9 Fibronectin type-III domains span residues 269 to 370 (NIAK…TMSC), 374 to 466 (APNL…TSGT), 470 to 563 (TPAS…TCPD), 567 to 661 (APSK…TPAV), 665 to 758 (PCQP…TAPG), 762 to 852 (QCKP…TPAS), 864 to 951 (SEDE…TKPL), 952 to 1045 (PPDP…TPKS), and 1046 to 1151 (VPAA…TEPP). The disordered stretch occupies residues 553-574 (SETVDYTTCPDKPGAPSKPSVK). The helical transmembrane segment at 1172-1192 (VCAAVILALFAIFSILIAVII) threads the bilayer.

This sequence belongs to the FNDC3 family.

Its subcellular location is the golgi apparatus membrane. This is Fibronectin type-III domain-containing protein 3a (FNDC3A) from Gallus gallus (Chicken).